Reading from the N-terminus, the 467-residue chain is ASVGFKAGVKDYRLTYYTPEYQTKDTDILAAFRVTPQPGVPPEEAGAAVAAESSTGTWTTVWTDGLTSLDRYKGRCYDIEPVPGEETQFIAYVAYPLDLFEEGSVTNLFTSIVGNVFGFKALRALRLEDLRIPPAYSKTFQGPPHGIQVERDKLNKYGRPLLGCTIKPKLGLSAKNYGRAVYECLRGGLDFTKDDENVNSQPFMRWRDRFVFCAEAIYKAQAETGEIKGHYLNATAGTCEEMMKRAVFARELGVPIIMHDYLTGGFTANTSLAHYCRDNGLLLHIHRAMHAVIDRQRIHGMHFRVLAKALRMSGGDHIHAGTVVGKLEGERDVTLGFVDLLRDDFIEKDRSRGIYFTQDWVSMPGVLPVASGGIHVWHMPALTEIFGDDSVLQFGGGTLGHPWGNAPGAVANRVALEACVQARNEGRDLAREGNEVIREASKWSPELAAACEVWKEIKFEFEAIDVL.

Position 6 is an N6,N6,N6-trimethyllysine (lysine 6). Substrate contacts are provided by asparagine 115 and threonine 165. The active-site Proton acceptor is lysine 167. Lysine 169 provides a ligand contact to substrate. Mg(2+)-binding residues include lysine 193, aspartate 195, and glutamate 196. Lysine 193 is modified (N6-carboxylysine). Residue histidine 286 is the Proton acceptor of the active site. The substrate site is built by arginine 287, histidine 319, and serine 371.

Belongs to the RuBisCO large chain family. Type I subfamily. Heterohexadecamer of 8 large chains and 8 small chains; disulfide-linked. The disulfide link is formed within the large subunit homodimers. It depends on Mg(2+) as a cofactor. The disulfide bond which can form in the large chain dimeric partners within the hexadecamer appears to be associated with oxidative stress and protein turnover.

Its subcellular location is the plastid. It localises to the chloroplast. It carries out the reaction 2 (2R)-3-phosphoglycerate + 2 H(+) = D-ribulose 1,5-bisphosphate + CO2 + H2O. The catalysed reaction is D-ribulose 1,5-bisphosphate + O2 = 2-phosphoglycolate + (2R)-3-phosphoglycerate + 2 H(+). Functionally, ruBisCO catalyzes two reactions: the carboxylation of D-ribulose 1,5-bisphosphate, the primary event in carbon dioxide fixation, as well as the oxidative fragmentation of the pentose substrate in the photorespiration process. Both reactions occur simultaneously and in competition at the same active site. This chain is Ribulose bisphosphate carboxylase large chain, found in Cedrus atlantica (Atlas cedar).